A 358-amino-acid polypeptide reads, in one-letter code: U5 small nuclear ribonucleoprotein 40 kDa protein (358 aa).

Lys-18 is covalently cross-linked (Glycyl lysine isopeptide (Lys-Gly) (interchain with G-Cter in SUMO2)). Position 21 is an asymmetric dimethylarginine (Arg-21). WD repeat units follow at residues 65-104, 108-147, 150-190, 192-231, 234-273, 284-323, and 326-358; these read GHEG…DNYA, GHSG…RVKR, GHTS…AIQT, QNTY…LTYT, GHAD…PKER, NFEK…ILYK, and GHAG…GEIQ. Residue Lys-271 forms a Glycyl lysine isopeptide (Lys-Gly) (interchain with G-Cter in SUMO2) linkage.

In terms of assembly, component of the pre-catalytic and catalytic spliceosome complexes. Component of the postcatalytic spliceosome P complex. Part of the U5 snRNP complex. Interacts with PRPF8. Component of the U4/U6-U5 tri-snRNP complex composed of the U4, U6 and U5 snRNAs and at least PRPF3, PRPF4, PRPF6, PRPF8, PRPF31, SNRNP200, TXNL4A, WDR57, SNRNP40, DDX23, CD2BP2, PPIH, SNU13, EFTUD2, SART1 and USP39. Component of the minor spliceosome, which splices U12-type introns.

It is found in the nucleus. Required for pre-mRNA splicing as component of the activated spliceosome. Component of the U5 small nuclear ribonucleoprotein (snRNP) complex and the U4/U6-U5 tri-snRNP complex, building blocks of the spliceosome. As a component of the minor spliceosome, involved in the splicing of U12-type introns in pre-mRNAs. This Bos taurus (Bovine) protein is U5 small nuclear ribonucleoprotein 40 kDa protein (SNRNP40).